We begin with the raw amino-acid sequence, 434 residues long: MPIITDVYAREVLDSRGNPTVEVEVLTESGAFGRALVPSGASTGEHEAVELRDGDKSRYLGKGVTKAVENVNEIIAPEIIEGEFSVLDQVSIDKMMIALDGTPNKGKLGANAILGVSIAVARAAADLLGQPLYKYLGGFNGKQLPVPMMNIVNGGSHSDAPIAFQEFMILPVGATTFKESLRWGTEIFHNLKSILSKRGLETAVGDEGGFAPKFEGTEDAVETIIQAIEAAGYKPGEEVFLGFDCASSEFYENGVYDYSKFEGEHGAKRTAAEQVDYLEQLVDKYPIITIEDGMDENDWDGWKQLTERIGDRVQLVGDDLFVTNTEILAKGIENGIGNSILIKVNQIGTLTETFDAIEMAQKAGYTAVVSHRSGETEDTTIADIAVATNAGQIKTGSLSRTDRIAKYNQLLRIEDELFETAKYDGIKSFYNLDK.

Q165 provides a ligand contact to (2R)-2-phosphoglycerate. The Proton donor role is filled by E207. Mg(2+)-binding residues include D244, E291, and D318. (2R)-2-phosphoglycerate contacts are provided by K343, R372, S373, and K394. K343 acts as the Proton acceptor in catalysis.

It belongs to the enolase family. Mg(2+) serves as cofactor.

It localises to the cytoplasm. It is found in the secreted. The protein resides in the cell surface. The catalysed reaction is (2R)-2-phosphoglycerate = phosphoenolpyruvate + H2O. Its pathway is carbohydrate degradation; glycolysis; pyruvate from D-glyceraldehyde 3-phosphate: step 4/5. Its function is as follows. Catalyzes the reversible conversion of 2-phosphoglycerate (2-PG) into phosphoenolpyruvate (PEP). It is essential for the degradation of carbohydrates via glycolysis. The sequence is that of Enolase from Staphylococcus aureus (strain USA300 / TCH1516).